A 197-amino-acid polypeptide reads, in one-letter code: Imidazoleglycerol-phosphate dehydratase (197 aa).

Belongs to the imidazoleglycerol-phosphate dehydratase family.

It localises to the cytoplasm. The catalysed reaction is D-erythro-1-(imidazol-4-yl)glycerol 3-phosphate = 3-(imidazol-4-yl)-2-oxopropyl phosphate + H2O. It participates in amino-acid biosynthesis; L-histidine biosynthesis; L-histidine from 5-phospho-alpha-D-ribose 1-diphosphate: step 6/9. The chain is Imidazoleglycerol-phosphate dehydratase from Rhodopseudomonas palustris (strain TIE-1).